The chain runs to 101 residues: Urease subunit beta (101 aa).

It belongs to the urease beta subunit family. As to quaternary structure, heterotrimer of UreA (gamma), UreB (beta) and UreC (alpha) subunits. Three heterotrimers associate to form the active enzyme.

The protein resides in the cytoplasm. It carries out the reaction urea + 2 H2O + H(+) = hydrogencarbonate + 2 NH4(+). The protein operates within nitrogen metabolism; urea degradation; CO(2) and NH(3) from urea (urease route): step 1/1. In Cereibacter sphaeroides (strain ATCC 17029 / ATH 2.4.9) (Rhodobacter sphaeroides), this protein is Urease subunit beta.